The primary structure comprises 622 residues: Sodium-dependent serotonin transporter (622 aa).

The disordered stretch occupies residues 1–53 (MDRSGSSDFAGAAATTGRSNPAPWSDDKESPNNEDDSNEDDGDHTTPAKVTDP). Residues 1–82 (MDRSGSSDFA…TRETWGQKAE (82 aa)) lie on the Cytoplasmic side of the membrane. The span at 32-42 (NNEDDSNEDDG) shows a compositional bias: acidic residues. 3 helical membrane-spanning segments follow: residues 83 to 103 (FLLAVIGFAVDLGNVWRFPYI), 111 to 130 (AFLVPYCLFLIFGGLPLFYM), and 155 to 175 (GVGYAICLIDIYMGMYYNTII). Na(+)-binding residues include G89, A91, V92, and N96. Residues 176 to 244 (GWAVYYLFAS…NGLDFMGPVK (69 aa)) lie on the Extracellular side of the membrane. Residues C195 and C204 are joined by a disulfide bond. N211 carries N-linked (GlcNAc...) asparagine glycosylation. 5 helical membrane-spanning segments follow: residues 245 to 263 (PTLALCVFGVFVLVYFSLW), 272 to 289 (VVWVTALAPYVVLIILLV), 325 to 342 (IFFSLGPGFGTLLALSSY), 354 to 375 (LITSSINCLTSFLAGFVIFSVL), and 408 to 427 (MSGSVFWSIIFFLMLITLGL). Na(+) contacts are provided by S328, N360, L425, D428, and S429. The next 4 helical transmembrane spans lie at 455–473 (LFVLLLLAFIFLCALPTMT), 489–509 (GLAILFVVFVEAAGVFWFYGV), 530–549 (ICWTYISPVFLLTIFIFSIM), and 568–586 (VGWAVTCSSVLCIPMYIIY). The Cytoplasmic portion of the chain corresponds to 587–622 (KFFFASKGGCRQRLQESFQPEDNCGSVVPGQQGTSV).

The protein belongs to the sodium:neurotransmitter symporter (SNF) (TC 2.A.22) family. In terms of tissue distribution, expression is specific to cell bodies in the ventral ganglion of the embryonic and larval nervous system.

The protein resides in the cell membrane. Functionally, terminates the action of serotonin by its high affinity sodium-dependent reuptake into presynaptic terminals. The polypeptide is Sodium-dependent serotonin transporter (SerT) (Drosophila melanogaster (Fruit fly)).